The sequence spans 189 residues: dCTP deaminase (189 aa).

Residues 112–117 (KSTYAR), 136–138 (TLE), Gln157, Tyr171, and Gln181 contribute to the dCTP site. Glu138 serves as the catalytic Proton donor/acceptor.

The protein belongs to the dCTP deaminase family. Homotrimer.

It carries out the reaction dCTP + H2O + H(+) = dUTP + NH4(+). It functions in the pathway pyrimidine metabolism; dUMP biosynthesis; dUMP from dCTP (dUTP route): step 1/2. Functionally, catalyzes the deamination of dCTP to dUTP. This Methylacidiphilum infernorum (isolate V4) (Methylokorus infernorum (strain V4)) protein is dCTP deaminase.